The chain runs to 208 residues: Small ribosomal subunit protein uS3 (208 aa).

The KH type-2 domain maps to 16 to 85 (VDEYLKNKLP…KPQIEVKQIE (70 aa)).

This sequence belongs to the universal ribosomal protein uS3 family. In terms of assembly, part of the 30S ribosomal subunit.

Its function is as follows. Binds the lower part of the 30S subunit head. The sequence is that of Small ribosomal subunit protein uS3 from Methanococcus aeolicus (strain ATCC BAA-1280 / DSM 17508 / OCM 812 / Nankai-3).